Here is a 298-residue protein sequence, read N- to C-terminus: Ornithine carbamoyltransferase (298 aa).

Residues 50 to 53, Q77, R101, and 128 to 131 contribute to the carbamoyl phosphate site; these read STRT and HPCQ. L-ornithine contacts are provided by residues N159, D216, and 220–221; that span reads SM. Carbamoyl phosphate-binding positions include 256 to 257 and R284; that span reads CL.

Belongs to the aspartate/ornithine carbamoyltransferase superfamily. OTCase family.

It is found in the cytoplasm. The catalysed reaction is carbamoyl phosphate + L-ornithine = L-citrulline + phosphate + H(+). It participates in amino-acid biosynthesis; L-arginine biosynthesis; L-arginine from L-ornithine and carbamoyl phosphate: step 1/3. Its function is as follows. Reversibly catalyzes the transfer of the carbamoyl group from carbamoyl phosphate (CP) to the N(epsilon) atom of ornithine (ORN) to produce L-citrulline. This Methylococcus capsulatus (strain ATCC 33009 / NCIMB 11132 / Bath) protein is Ornithine carbamoyltransferase.